The following is a 404-amino-acid chain: Probable tRNA sulfurtransferase (404 aa).

A THUMP domain is found at 61-166 (EAISERLKDV…SGYSYIMCGE (106 aa)). ATP-binding positions include 184-185 (LL), 209-210 (HF), arginine 266, glycine 288, and glutamine 297.

It belongs to the ThiI family.

Its subcellular location is the cytoplasm. The catalysed reaction is [ThiI sulfur-carrier protein]-S-sulfanyl-L-cysteine + a uridine in tRNA + 2 reduced [2Fe-2S]-[ferredoxin] + ATP + H(+) = [ThiI sulfur-carrier protein]-L-cysteine + a 4-thiouridine in tRNA + 2 oxidized [2Fe-2S]-[ferredoxin] + AMP + diphosphate. It carries out the reaction [ThiS sulfur-carrier protein]-C-terminal Gly-Gly-AMP + S-sulfanyl-L-cysteinyl-[cysteine desulfurase] + AH2 = [ThiS sulfur-carrier protein]-C-terminal-Gly-aminoethanethioate + L-cysteinyl-[cysteine desulfurase] + A + AMP + 2 H(+). It functions in the pathway cofactor biosynthesis; thiamine diphosphate biosynthesis. Catalyzes the ATP-dependent transfer of a sulfur to tRNA to produce 4-thiouridine in position 8 of tRNAs, which functions as a near-UV photosensor. Also catalyzes the transfer of sulfur to the sulfur carrier protein ThiS, forming ThiS-thiocarboxylate. This is a step in the synthesis of thiazole, in the thiamine biosynthesis pathway. The sulfur is donated as persulfide by IscS. The chain is Probable tRNA sulfurtransferase from Bacillus cereus (strain G9842).